Consider the following 202-residue polypeptide: uncharacterized protein (202 aa).

A disordered region spans residues F179–G202.

This is an uncharacterized protein from Haemophilus influenzae (strain ATCC 51907 / DSM 11121 / KW20 / Rd).